A 461-amino-acid polypeptide reads, in one-letter code: tRNA modification GTPase MnmE (461 aa).

3 residues coordinate (6S)-5-formyl-5,6,7,8-tetrahydrofolate: arginine 23, glutamate 88, and arginine 127. The TrmE-type G domain maps to glycine 223 to phenylalanine 383. Position 233 (asparagine 233) interacts with K(+). Residues asparagine 233–serine 238, threonine 252–threonine 258, and aspartate 277–glycine 280 each bind GTP. Serine 237 contributes to the Mg(2+) binding site. K(+) is bound by residues threonine 252, isoleucine 254, and threonine 257. Threonine 258 contacts Mg(2+). Lysine 461 is a (6S)-5-formyl-5,6,7,8-tetrahydrofolate binding site.

The protein belongs to the TRAFAC class TrmE-Era-EngA-EngB-Septin-like GTPase superfamily. TrmE GTPase family. In terms of assembly, homodimer. Heterotetramer of two MnmE and two MnmG subunits. K(+) is required as a cofactor.

Its subcellular location is the cytoplasm. Exhibits a very high intrinsic GTPase hydrolysis rate. Involved in the addition of a carboxymethylaminomethyl (cmnm) group at the wobble position (U34) of certain tRNAs, forming tRNA-cmnm(5)s(2)U34. The sequence is that of tRNA modification GTPase MnmE from Clostridium botulinum (strain Loch Maree / Type A3).